We begin with the raw amino-acid sequence, 120 residues long: Large ribosomal subunit protein bL20 (120 aa).

This sequence belongs to the bacterial ribosomal protein bL20 family.

Functionally, binds directly to 23S ribosomal RNA and is necessary for the in vitro assembly process of the 50S ribosomal subunit. It is not involved in the protein synthesizing functions of that subunit. The sequence is that of Large ribosomal subunit protein bL20 from Cereibacter sphaeroides (strain ATCC 17025 / ATH 2.4.3) (Rhodobacter sphaeroides).